A 614-amino-acid polypeptide reads, in one-letter code: Bifunctional 3'-phosphoadenosine 5'-phosphosulfate synthase 2 (614 aa).

Residues methionine 1–isoleucine 215 form an adenylyl-sulfate kinase region. Glycine 52 to threonine 57 lines the ATP pocket. Adenosine 5'-phosphosulfate contacts are provided by residues aspartate 79–arginine 82, phenylalanine 91, arginine 96–asparagine 99, isoleucine 122–serine 123, lysine 161, and glycine 174–phenylalanine 175. ATP is bound by residues serine 197, glutamine 409–asparagine 412, glycine 511–alanine 515, and alanine 553. The sulfate adenylyltransferase stretch occupies residues isoleucine 224–asparagine 614.

It in the N-terminal section; belongs to the APS kinase family. This sequence in the C-terminal section; belongs to the sulfate adenylyltransferase family. As to expression, expressed in cartilage and adrenal gland.

The catalysed reaction is sulfate + ATP + H(+) = adenosine 5'-phosphosulfate + diphosphate. It carries out the reaction adenosine 5'-phosphosulfate + ATP = 3'-phosphoadenylyl sulfate + ADP + H(+). It functions in the pathway sulfur metabolism; sulfate assimilation. Its function is as follows. Bifunctional enzyme with both ATP sulfurylase and APS kinase activity, which mediates two steps in the sulfate activation pathway. The first step is the transfer of a sulfate group to ATP to yield adenosine 5'-phosphosulfate (APS), and the second step is the transfer of a phosphate group from ATP to APS yielding 3'-phosphoadenylylsulfate/PAPS, the activated sulfate donor used by sulfotransferases. In mammals, PAPS is the sole source of sulfate while APS appears to only be an intermediate in the sulfate-activation pathway. Plays indirectly an important role in skeletogenesis during postnatal growth. This is Bifunctional 3'-phosphoadenosine 5'-phosphosulfate synthase 2 (PAPSS2) from Homo sapiens (Human).